A 289-amino-acid chain; its full sequence is Shikimate dehydrogenase (NADP(+)) (289 aa).

Residues 22 to 24 and Thr69 contribute to the shikimate site; that span reads SRS. The active-site Proton acceptor is the Lys73. Glu85 contributes to the NADP(+) binding site. 2 residues coordinate shikimate: Asn94 and Asp109. NADP(+)-binding positions include 134 to 138, 158 to 163, and Ile226; these read GAGGA and NRTLSR. Residue Tyr228 coordinates shikimate. Gly249 is an NADP(+) binding site.

It belongs to the shikimate dehydrogenase family. As to quaternary structure, homodimer.

The enzyme catalyses shikimate + NADP(+) = 3-dehydroshikimate + NADPH + H(+). The protein operates within metabolic intermediate biosynthesis; chorismate biosynthesis; chorismate from D-erythrose 4-phosphate and phosphoenolpyruvate: step 4/7. In terms of biological role, involved in the biosynthesis of the chorismate, which leads to the biosynthesis of aromatic amino acids. Catalyzes the reversible NADPH linked reduction of 3-dehydroshikimate (DHSA) to yield shikimate (SA). The protein is Shikimate dehydrogenase (NADP(+)) of Brucella canis (strain ATCC 23365 / NCTC 10854 / RM-666).